Consider the following 904-residue polypeptide: Phosphoenolpyruvate carboxylase (904 aa).

Active-site residues include His151 and Lys570.

Belongs to the PEPCase type 1 family. Requires Mg(2+) as cofactor.

It carries out the reaction oxaloacetate + phosphate = phosphoenolpyruvate + hydrogencarbonate. Forms oxaloacetate, a four-carbon dicarboxylic acid source for the tricarboxylic acid cycle. This chain is Phosphoenolpyruvate carboxylase, found in Xanthomonas campestris pv. campestris (strain 8004).